The sequence spans 130 residues: Lysozyme C (130 aa).

In terms of domain architecture, C-type lysozyme spans 1-130 (KIYERCELAR…LTPYIRGCGV (130 aa)). 4 disulfides stabilise this stretch: C6/C128, C30/C116, C65/C81, and C77/C95. Active-site residues include E35 and D53.

Belongs to the glycosyl hydrolase 22 family. Monomer.

It is found in the secreted. The catalysed reaction is Hydrolysis of (1-&gt;4)-beta-linkages between N-acetylmuramic acid and N-acetyl-D-glucosamine residues in a peptidoglycan and between N-acetyl-D-glucosamine residues in chitodextrins.. Its function is as follows. Lysozymes have primarily a bacteriolytic function; those in tissues and body fluids are associated with the monocyte-macrophage system and enhance the activity of immunoagents. The chain is Lysozyme C (LYZ) from Oryctolagus cuniculus (Rabbit).